Reading from the N-terminus, the 196-residue chain is Molybdenum cofactor guanylyltransferase (196 aa).

Residues 10 to 12 (LAG), Lys23, Asn51, Asp69, and Asp99 each bind GTP. Asp99 lines the Mg(2+) pocket.

Belongs to the MobA family. In terms of assembly, monomer. Mg(2+) serves as cofactor.

It localises to the cytoplasm. It catalyses the reaction Mo-molybdopterin + GTP + H(+) = Mo-molybdopterin guanine dinucleotide + diphosphate. Transfers a GMP moiety from GTP to Mo-molybdopterin (Mo-MPT) cofactor (Moco or molybdenum cofactor) to form Mo-molybdopterin guanine dinucleotide (Mo-MGD) cofactor. The polypeptide is Molybdenum cofactor guanylyltransferase (Shewanella woodyi (strain ATCC 51908 / MS32)).